Consider the following 756-residue polypeptide: MNKSLMVTKRDGTQEQINLDKIHRVITWAAEGLDNVSVSQVELRSHIQFYEGIRTSDIHETIIKAAADLISKDSPDYQYLAARLAIFHLRKKAYGHFDPPRLYDHVKKLVRMEKYDQALLDDYTREEWDTMDGFIDHWRDMTFSYAAVKQLEGKYLVQNRVTGEIYESAQFLYLLVSASLFSKYPKETRLDYVKRFYDATSTFKISLPTPIMAGVRTPTRQFSSCVLIECDDSLDSINATASAIVKYVSQRAGIGINAGAIRALGSEIRGGEAFHTGCIPFYKYFQTAVKSCSQGGVRGGAATLYYPIWHLEAENLLVLKNNRGVEDNRVRHMDYGVQLNKLMYQRLIKGSEITLFSPSDVPGLYEAFFADQDKFEELYVKYEQDPTIRKRTVKAVEIFSLLMQERASTGRIYIQNVDHCNTHSPFDPQVAPVRQSNLCLEIALPTKPLQHINDENGEIALCTLSAFNLGKIENLDELEELADLAVRSLDALLDYQDYPVVAAKRSSLARRSLGIGVINYAYYLAKNGVRYSDGSANDLTHRTFEAIQYYLLKASMNLAKEQGACEYFNETTYAKGILPIDTYKKDLDSLTQEPLHYDWESLRKDIQEFGLRNSTLTALMPSETSSQISNATNGIEPPRGHVSIKASKDGILKQVVPEYENLMDNYELLWDIPSNDGYLHLVGIMQKFVDQAISANTNYDPKRFEDGKVPMKVLLKDLLTAYKYGLKTLYYQNTRDGAEDVQEDLDDGCAGGACKI.

One can recognise an ATP-cone domain in the interval 5 to 95 (LMVTKRDGTQ…IFHLRKKAYG (91 aa)). Residues Lys9, 15-21 (EQINLDK), Thr55, and Lys91 each bind ATP. Position 209 (Thr209) interacts with GDP. The cysteines at positions 225 and 462 are disulfide-linked. DTTP contacts are provided by residues 232–234 (DSL), Arg262, and Arg269. Asn437 contributes to the GDP binding site. Asn437 functions as the Proton acceptor in the catalytic mechanism. Cys439 acts as the Cysteine radical intermediate in catalysis. GDP is bound by residues Glu441 and 623–625 (ETS). The active-site Proton acceptor is the Glu441.

This sequence belongs to the ribonucleoside diphosphate reductase large chain family. As to quaternary structure, tetramer of two alpha and two beta subunits.

The enzyme catalyses a 2'-deoxyribonucleoside 5'-diphosphate + [thioredoxin]-disulfide + H2O = a ribonucleoside 5'-diphosphate + [thioredoxin]-dithiol. With respect to regulation, under complex allosteric control mediated by deoxynucleoside triphosphates and ATP binding to separate specificity and activation sites on the alpha subunit. The type of nucleotide bound at the specificity site determines substrate preference. It seems probable that ATP makes the enzyme reduce CDP and UDP, dGTP favors ADP reduction and dTTP favors GDP reduction. Stimulated by ATP and inhibited by dATP binding to the activity site. Functionally, provides the precursors necessary for DNA synthesis. Catalyzes the biosynthesis of deoxyribonucleotides from the corresponding ribonucleotides. The protein is Ribonucleoside-diphosphate reductase subunit alpha (nrdA) of Haemophilus influenzae (strain ATCC 51907 / DSM 11121 / KW20 / Rd).